The primary structure comprises 1044 residues: Ras GTPase-activating protein 1 (1044 aa).

An N-acetylmethionine modification is found at methionine 1. The segment at 1–160 (MMAAEAGGEE…DEGDSLDGPE (160 aa)) is hydrophobic. An SH2 1 domain is found at 178–269 (WYHGKLDRTI…LKGEKLLYPV (92 aa)). The SH3 domain maps to 276–338 (EDRRRVRAIL…VEDLVEEVGR (63 aa)). In terms of domain architecture, SH2 2 spans 348-438 (WFHGKISKQE…VEGYYLKEPV (91 aa)). In terms of domain architecture, PH spans 471–574 (NIVKKGYLLK…WMKGLQAFCN (104 aa)). Positions 574-687 (NLRKSSPGTS…QKGHATDEWF (114 aa)) constitute a C2 domain. Tyrosine 612 carries the post-translational modification Phosphotyrosine. 2 consecutive repeats follow at residues 646–664 (PDIN…KSKD) and 665–683 (PDIL…GHAT). The 211-residue stretch at 761-971 (KLESLLLCTL…HRMIMFLDEL (211 aa)) folds into the Ras-GAP domain. Residue serine 828 is modified to Phosphoserine.

As to quaternary structure, interacts with SQSTM1. Interacts with SPSB1; the interaction does not promote degradation. Interacts with CAV2 (tyrosine phosphorylated form). Directly interacts with NCK1. Interacts with PDGFRB (tyrosine phosphorylated). Interacts (via SH2 domain) with the 'Tyr-9' phosphorylated form of PDPK1. Interacts with tyrosine-phosphorylated EPHB4. Phosphorylated by SRC and LCK. The phosphorylation SRC inhibits its ability to stimulate the Ras-GTPase activity, whereas phosphorylation by LCK does not display any effect on stimulation activity.

It localises to the cytoplasm. Functionally, inhibitory regulator of the Ras-cyclic AMP pathway. Stimulates the GTPase of normal but not oncogenic Ras p21. The protein is Ras GTPase-activating protein 1 (RASA1) of Bos taurus (Bovine).